Reading from the N-terminus, the 709-residue chain is Early transcription factor 82 kDa subunit (709 aa).

Belongs to the poxviridae VETF large subunit family. Heterodimer of a 70 kDa and a 82 kDa subunit. Part of the early transcription complex composed of ETF, RAP94, and the DNA-directed RNA polymerase.

It localises to the virion. Acts with RNA polymerase to initiate transcription from early gene promoters. Is recruited by the RPO-associated protein of 94 kDa (RAP94) to form the early transcription complex, which also contains the core RNA polymerase. ETF heterodimer binds to early gene promoters. This Vertebrata (FPV) protein is Early transcription factor 82 kDa subunit (VETFL).